The primary structure comprises 54 residues: Ribulose bisphosphate carboxylase large chain (54 aa).

Residues 1–2 (MS) constitute a propeptide that is removed on maturation. P3 is modified (N-acetylproline). K14 carries the post-translational modification N6,N6,N6-trimethyllysine.

This sequence belongs to the RuBisCO large chain family. Type I subfamily. Heterohexadecamer of 8 large chains and 8 small chains.

The protein localises to the plastid. Its subcellular location is the chloroplast. It carries out the reaction 2 (2R)-3-phosphoglycerate + 2 H(+) = D-ribulose 1,5-bisphosphate + CO2 + H2O. It catalyses the reaction D-ribulose 1,5-bisphosphate + O2 = 2-phosphoglycolate + (2R)-3-phosphoglycerate + 2 H(+). In terms of biological role, ruBisCO catalyzes two reactions: the carboxylation of D-ribulose 1,5-bisphosphate, the primary event in carbon dioxide fixation, as well as the oxidative fragmentation of the pentose substrate in the photorespiration process. Both reactions occur simultaneously and in competition at the same active site. This is Ribulose bisphosphate carboxylase large chain (rbcL) from Icacina mannii.